Here is a 232-residue protein sequence, read N- to C-terminus: MLVKICGVKDVEAAQVALESGADMIGMIFVPGKPRTIQVSNAKEVVSLVESKRKGLNSNELYDSLKPGQDSLWFEQVHDSIKSNGPYSVGVFRNQSIEEINNIIEEVDIDFVQLHGQESHDEYIPQLKKPVITRFVPNETKVLQSLKPNKHLLPLFDSEAGGEGVKLNWSNLSDWSAKNNARYLLAGGLTPDNVHEAIKLDGVIGVDVSGGVETNGVKDYVKIKEFVKNALQ.

The protein belongs to the TrpF family.

The enzyme catalyses N-(5-phospho-beta-D-ribosyl)anthranilate = 1-(2-carboxyphenylamino)-1-deoxy-D-ribulose 5-phosphate. The protein operates within amino-acid biosynthesis; L-tryptophan biosynthesis; L-tryptophan from chorismate: step 3/5. This is N-(5'-phosphoribosyl)anthranilate isomerase (TRP1) from Wickerhamomyces anomalus (Yeast).